Reading from the N-terminus, the 418-residue chain is Tryptophan synthase beta chain (418 aa).

Over residues 1 to 17 (MTSTLPNASTPDPSSLQ) the composition is skewed to polar residues. The interval 1–23 (MTSTLPNASTPDPSSLQPAVRPG) is disordered. Lys-111 is subject to N6-(pyridoxal phosphate)lysine.

It belongs to the TrpB family. In terms of assembly, tetramer of two alpha and two beta chains. The cofactor is pyridoxal 5'-phosphate.

It catalyses the reaction (1S,2R)-1-C-(indol-3-yl)glycerol 3-phosphate + L-serine = D-glyceraldehyde 3-phosphate + L-tryptophan + H2O. It functions in the pathway amino-acid biosynthesis; L-tryptophan biosynthesis; L-tryptophan from chorismate: step 5/5. Functionally, the beta subunit is responsible for the synthesis of L-tryptophan from indole and L-serine. The chain is Tryptophan synthase beta chain from Synechococcus sp. (strain CC9605).